Here is a 72-residue protein sequence, read N- to C-terminus: Small proline-rich protein 2E (72 aa).

A compositionally biased stretch (low complexity) spans 1–11; it reads MSYQQQQCKQP. The tract at residues 1 to 20 is disordered; the sequence is MSYQQQQCKQPCQPPPVCPT. 3 tandem repeats follow at residues 21–29, 30–38, and 39–47. The 3 X 9 AA tandem repeats of P-K-C-P-[EQ]-P-C-P-P stretch occupies residues 21 to 47; sequence PKCPEPCPPPKCPEPCPPPKCPQPCPP. The interval 42-72 is disordered; the sequence is PQPCPPQQCQQKCPPVTPSPPCQPKCPPKSK. The span at 56–72 shows a compositional bias: pro residues; the sequence is PVTPSPPCQPKCPPKSK.

This sequence belongs to the cornifin (SPRR) family.

The protein localises to the cytoplasm. Its function is as follows. Cross-linked envelope protein of keratinocytes. It is a keratinocyte protein that first appears in the cell cytosol, but ultimately becomes cross-linked to membrane proteins by transglutaminase. All that results in the formation of an insoluble envelope beneath the plasma membrane. The chain is Small proline-rich protein 2E (SPRR2E) from Homo sapiens (Human).